The following is a 456-amino-acid chain: Bifunctional protein GlmU (456 aa).

The segment at M1–R231 is pyrophosphorylase. UDP-N-acetyl-alpha-D-glucosamine-binding positions include L10 to G13, K24, Q77, and G82 to T83. A Mg(2+)-binding site is contributed by D107. UDP-N-acetyl-alpha-D-glucosamine-binding residues include G143, E157, N172, and N229. A Mg(2+)-binding site is contributed by N229. The interval A232–A252 is linker. Residues G253 to E456 are N-acetyltransferase. UDP-N-acetyl-alpha-D-glucosamine-binding residues include R318 and K336. The active-site Proton acceptor is the H348. The UDP-N-acetyl-alpha-D-glucosamine site is built by Y351 and N362. Residues A365, N371–Y372, S390, S408, and R425 each bind acetyl-CoA.

The protein in the N-terminal section; belongs to the N-acetylglucosamine-1-phosphate uridyltransferase family. It in the C-terminal section; belongs to the transferase hexapeptide repeat family. As to quaternary structure, homotrimer. Mg(2+) is required as a cofactor.

Its subcellular location is the cytoplasm. The enzyme catalyses alpha-D-glucosamine 1-phosphate + acetyl-CoA = N-acetyl-alpha-D-glucosamine 1-phosphate + CoA + H(+). It catalyses the reaction N-acetyl-alpha-D-glucosamine 1-phosphate + UTP + H(+) = UDP-N-acetyl-alpha-D-glucosamine + diphosphate. The protein operates within nucleotide-sugar biosynthesis; UDP-N-acetyl-alpha-D-glucosamine biosynthesis; N-acetyl-alpha-D-glucosamine 1-phosphate from alpha-D-glucosamine 6-phosphate (route II): step 2/2. It functions in the pathway nucleotide-sugar biosynthesis; UDP-N-acetyl-alpha-D-glucosamine biosynthesis; UDP-N-acetyl-alpha-D-glucosamine from N-acetyl-alpha-D-glucosamine 1-phosphate: step 1/1. Its pathway is bacterial outer membrane biogenesis; LPS lipid A biosynthesis. Its function is as follows. Catalyzes the last two sequential reactions in the de novo biosynthetic pathway for UDP-N-acetylglucosamine (UDP-GlcNAc). The C-terminal domain catalyzes the transfer of acetyl group from acetyl coenzyme A to glucosamine-1-phosphate (GlcN-1-P) to produce N-acetylglucosamine-1-phosphate (GlcNAc-1-P), which is converted into UDP-GlcNAc by the transfer of uridine 5-monophosphate (from uridine 5-triphosphate), a reaction catalyzed by the N-terminal domain. This is Bifunctional protein GlmU from Sinorhizobium fredii (strain NBRC 101917 / NGR234).